The sequence spans 245 residues: 14-3-3 protein zeta (245 aa).

It belongs to the 14-3-3 family. In terms of assembly, homodimer.

Its subcellular location is the cytoplasm. Its function is as follows. Adapter protein implicated in the regulation of a large spectrum of both general and specialized signaling pathways. Binds to a large number of partners, usually by recognition of a phosphoserine or phosphothreonine motif. Binding generally results in the modulation of the activity of the binding partner. The chain is 14-3-3 protein zeta (ywhaz) from Xenopus tropicalis (Western clawed frog).